Reading from the N-terminus, the 303-residue chain is 2-dehydropantoate 2-reductase (303 aa).

NADP(+) is bound by residues 7–12 (GCGALG), Asn98, and Ala122. Asn98 is a binding site for substrate. The active-site Proton donor is the Lys176. Substrate-binding residues include Asn180, Asn184, Asn194, and Ser244. Position 256 (Glu256) interacts with NADP(+).

The protein belongs to the ketopantoate reductase family. Monomer.

The protein resides in the cytoplasm. It carries out the reaction (R)-pantoate + NADP(+) = 2-dehydropantoate + NADPH + H(+). It functions in the pathway cofactor biosynthesis; (R)-pantothenate biosynthesis; (R)-pantoate from 3-methyl-2-oxobutanoate: step 2/2. In terms of biological role, catalyzes the NADPH-dependent reduction of ketopantoate into pantoic acid. Has a strong preference for NADPH over NADH as the electron acceptor. Pantoate, ketoisovalerate, oxaloacetate, pyruvate, 3-hydroxypyruvate, alpha-ketoglutarate, alpha-ketobutyrate, and acetaldehyde cannot serve as substrates for reduction. In Salmonella typhimurium (strain LT2 / SGSC1412 / ATCC 700720), this protein is 2-dehydropantoate 2-reductase.